Reading from the N-terminus, the 407-residue chain is Sensor histidine kinase YdfH (407 aa).

The Cytoplasmic segment spans residues 1–25; the sequence is MLIRNPFKDKYYSHDRRALNMLALR. The next 2 membrane-spanning stretches (helical) occupy residues 26–46 and 47–67; these read VPGLAFILMIYIASIVLQFVS and GGWSILLLYAFTILIAIFALL. Over 68–78 the chain is Cytoplasmic; the sequence is HWHSYRWVKKR. 2 helical membrane passes run 79 to 99 and 100 to 120; these read VILYFAVQGLITFALANLMTG and FFILVIIGLYAFLIGQIIGMA. Topologically, residues 121-125 are cytoplasmic; that stretch reads DRRRT. The helical transmembrane segment at 126–146 threads the bilayer; sequence FLILYLLLLLVINSAYHLHKG. Residues 147 to 150 are Extracellular-facing; sequence EVLH. A helical transmembrane segment spans residues 151-171; it reads FIVIAAPIMIVIITYAATFFA. The Cytoplasmic segment spans residues 172 to 407; sequence QVDEKIKAQL…VPIQGEMQDE (236 aa). Residues 201 to 402 form the Histidine kinase domain; the sequence is ERQRMARDLH…QIEITVPIQG (202 aa). Phosphohistidine; by autocatalysis is present on histidine 210.

It localises to the cell membrane. The catalysed reaction is ATP + protein L-histidine = ADP + protein N-phospho-L-histidine.. Its function is as follows. Member of the two-component regulatory system YdfH/YdfI. May activate YdfI by phosphorylation. This is Sensor histidine kinase YdfH (ydfH) from Bacillus subtilis (strain 168).